We begin with the raw amino-acid sequence, 239 residues long: Lactate utilization protein A (239 aa).

The protein belongs to the LutA/YkgE family.

Is involved in L-lactate degradation and allows cells to grow with lactate as the sole carbon source. The polypeptide is Lactate utilization protein A (Shouchella clausii (strain KSM-K16) (Alkalihalobacillus clausii)).